A 129-amino-acid polypeptide reads, in one-letter code: ATP synthase epsilon chain (129 aa).

This sequence belongs to the ATPase epsilon chain family. F-type ATPases have 2 components, CF(1) - the catalytic core - and CF(0) - the membrane proton channel. CF(1) has five subunits: alpha(3), beta(3), gamma(1), delta(1), epsilon(1). CF(0) has three main subunits: a, b and c.

The protein resides in the cell inner membrane. In terms of biological role, produces ATP from ADP in the presence of a proton gradient across the membrane. The chain is ATP synthase epsilon chain from Campylobacter fetus subsp. fetus (strain 82-40).